We begin with the raw amino-acid sequence, 61 residues long: Metallothionein-1F (61 aa).

Met1 carries the N-acetylmethionine modification. The segment at 1–29 (MDPNCSCAAGVSCTCAGSCKCKECKCTSC) is beta. Residues Cys5, Cys7, Cys13, Cys15, Cys19, Cys21, Cys24, Cys26, Cys29, Cys33, Cys34, Cys36, Cys37, Cys41, Cys44, Cys48, Cys50, and Cys57 each coordinate a divalent metal cation. The interval 30–61 (KKSCCSCCPVGCSKCAQGCVCKGASEKCSCCD) is alpha. Ser58 carries the post-translational modification Phosphoserine. 2 residues coordinate a divalent metal cation: Cys59 and Cys60.

It belongs to the metallothionein superfamily. Type 1 family. In terms of assembly, monomer.

Functionally, metallothioneins have a high content of cysteine residues that bind various heavy metals; these proteins are transcriptionally regulated by both heavy metals and glucocorticoids. The chain is Metallothionein-1F (MT1F) from Homo sapiens (Human).